A 254-amino-acid polypeptide reads, in one-letter code: Decaprenylphosphoryl-2-keto-beta-D-erythro-pentose reductase (254 aa).

Residue Asp-67 participates in NAD(+) binding. The Proton acceptor role is filled by Tyr-160. Position 164 (Lys-164) interacts with NAD(+).

The protein belongs to the short-chain dehydrogenases/reductases (SDR) family. In terms of assembly, interacts with DprE1 to form an epimerase complex.

Its subcellular location is the periplasm. It catalyses the reaction trans,octa-cis-decaprenylphospho-beta-D-arabinofuranose + NAD(+) = trans,octa-cis-decaprenylphospho-beta-D-erythro-pentofuranosid-2-ulose + NADH + H(+). It participates in cell wall biogenesis; cell wall polysaccharide biosynthesis. Functionally, component of the DprE1-DprE2 complex that catalyzes the 2-step epimerization of decaprenyl-phospho-ribose (DPR) to decaprenyl-phospho-arabinose (DPA), a key precursor that serves as the arabinose donor required for the synthesis of cell-wall arabinans. DprE1 catalyzes the first step of epimerization, namely FAD-dependent oxidation of the C2' hydroxyl of DPR to yield the keto intermediate decaprenyl-phospho-2'-keto-D-arabinose (DPX). The intermediate DPX is then transferred to DprE2 subunit of the epimerase complex, most probably through a 'substrate channel' at the interface of DprE1-DprE2 complex. DprE2 then catalyzes the second step of epimerization, the NAD(+)-dependent reduction of DPX that leads to the formation of DPA. In Mycolicibacterium smegmatis (strain ATCC 700084 / mc(2)155) (Mycobacterium smegmatis), this protein is Decaprenylphosphoryl-2-keto-beta-D-erythro-pentose reductase.